Here is an 83-residue protein sequence, read N- to C-terminus: Small integral membrane protein 22 (83 aa).

The helical transmembrane segment at 32–52 threads the bilayer; the sequence is VAFIVFLTFMGTVLLLLLLVV. The segment at 60 to 83 is disordered; that stretch reads SPGPRRESPRKERPKGVDNLALEP. A compositionally biased stretch (basic and acidic residues) spans 63-75; sequence PRRESPRKERPKG.

In terms of assembly, interacts with CANX and DDOST. Interacts with SQLE; this interaction modulates lipid droplet formation.

The protein localises to the membrane. It localises to the late endosome. Functionally, may modulate lipid droplet formation throught interaction with SQLE. This Homo sapiens (Human) protein is Small integral membrane protein 22.